The sequence spans 177 residues: Peptide methionine sulfoxide reductase MsrA (177 aa).

Cysteine 15 is a catalytic residue.

Belongs to the MsrA Met sulfoxide reductase family.

It catalyses the reaction L-methionyl-[protein] + [thioredoxin]-disulfide + H2O = L-methionyl-(S)-S-oxide-[protein] + [thioredoxin]-dithiol. The catalysed reaction is [thioredoxin]-disulfide + L-methionine + H2O = L-methionine (S)-S-oxide + [thioredoxin]-dithiol. In terms of biological role, has an important function as a repair enzyme for proteins that have been inactivated by oxidation. Catalyzes the reversible oxidation-reduction of methionine sulfoxide in proteins to methionine. The protein is Peptide methionine sulfoxide reductase MsrA of Mycobacterium leprae (strain Br4923).